The primary structure comprises 130 residues: Large ribosomal subunit protein bL20 (130 aa).

Belongs to the bacterial ribosomal protein bL20 family.

Binds directly to 23S ribosomal RNA and is necessary for the in vitro assembly process of the 50S ribosomal subunit. It is not involved in the protein synthesizing functions of that subunit. The polypeptide is Large ribosomal subunit protein bL20 (Salinispora tropica (strain ATCC BAA-916 / DSM 44818 / JCM 13857 / NBRC 105044 / CNB-440)).